A 116-amino-acid chain; its full sequence is Glycine-rich protein 3 short isoform (116 aa).

The first 24 residues, 1–24 (MASKTLLLLGLFAFLFIVSEMAAA), serve as a signal peptide directing secretion. Residues 27 to 83 (VKSESEETVKPEQHGGGFGDNGGGRYQGGGGHGGHGGGGYQGGGGRYQGGGGRQGGG) are disordered. The segment covering 29-39 (SESEETVKPEQ) has biased composition (basic and acidic residues). A compositionally biased stretch (gly residues) spans 40-83 (HGGGFGDNGGGRYQGGGGHGGHGGGGYQGGGGRYQGGGGRQGGG). 5 consecutive repeat copies span residues 54–59 (GGGGHG), 62–67 (GGGGYQ), 68–73 (GGGGRY), 75–80 (GGGGRQ), and 81–86 (GGGGSY). Residues 54–86 (GGGGHGGHGGGGYQGGGGRYQGGGGRQGGGGSY) are 5 X 6 AA tandem repeats of G-G-G-G-[HYRS]-[GYQ].

The protein belongs to the GRP family. In terms of assembly, interacts with WAK1 (via the extracellular domain). Component of a 500 kDa complex, composed of GRP3 or GRP3-S, WAK1 and KAPP.

It localises to the secreted. It is found in the extracellular space. The protein localises to the extracellular matrix. Regulates the function of the receptor protein kinase WAK1. In Arabidopsis thaliana (Mouse-ear cress), this protein is Glycine-rich protein 3 short isoform (GRP3S).